Reading from the N-terminus, the 309-residue chain is Eugenol synthase 2 (309 aa).

Residues threonine 13–isoleucine 16, valine 35–lysine 45, arginine 36, phenylalanine 86–glutamine 88, serine 111–phenylalanine 113, lysine 134, and asparagine 154–phenylalanine 156 contribute to the NADP(+) site. Lysine 134 (proton donor/acceptor) is an active-site residue.

It belongs to the NmrA-type oxidoreductase family. Mostly expressed in petals, and, to a lower extent, in sepals, stamens and pistils.

It carries out the reaction eugenol + a carboxylate + NADP(+) = a coniferyl ester + NADPH. The catalysed reaction is eugenol + acetate + NADP(+) = (E)-coniferyl acetate + NADPH. It functions in the pathway aromatic compound metabolism; phenylpropanoid biosynthesis. Catalyzes the synthesis of the phenylpropene eugenol from coniferyl acetate. Phenylpropenes are produced by plants as defense compounds with antimicrobial and antianimal properties, or as floral attractants of pollinators. The protein is Eugenol synthase 2 of Clarkia breweri (Fairy fans).